Reading from the N-terminus, the 156-residue chain is 3-hydroxyacyl-[acyl-carrier-protein] dehydratase FabZ (156 aa).

Residue His62 is part of the active site.

The protein belongs to the thioester dehydratase family. FabZ subfamily.

Its subcellular location is the cytoplasm. The catalysed reaction is a (3R)-hydroxyacyl-[ACP] = a (2E)-enoyl-[ACP] + H2O. Involved in unsaturated fatty acids biosynthesis. Catalyzes the dehydration of short chain beta-hydroxyacyl-ACPs and long chain saturated and unsaturated beta-hydroxyacyl-ACPs. This is 3-hydroxyacyl-[acyl-carrier-protein] dehydratase FabZ from Parasynechococcus marenigrum (strain WH8102).